We begin with the raw amino-acid sequence, 262 residues long: Octopine permease ATP-binding protein P (262 aa).

The ABC transporter domain maps to 9–254 (VKLTGIRKNF…PRTERFRQFL (246 aa)). 41–48 (GSSGSGKS) serves as a coordination point for ATP.

It belongs to the ABC transporter superfamily.

It localises to the cell inner membrane. In terms of biological role, component of the octopine active transport system probably consisting of four subunits: Q, M, P and T. The polypeptide is Octopine permease ATP-binding protein P (occP) (Rhizobium meliloti (Ensifer meliloti)).